Reading from the N-terminus, the 1025-residue chain is Putative receptor-like protein kinase At3g47110 (1025 aa).

An N-terminal signal peptide occupies residues 1–30; it reads MGVPCIVMRLILVSALLVSVSLEHSDMVCA. The Extracellular segment spans residues 31 to 653; sequence QTIRLTEETD…LPRRHSSVRK (623 aa). N-linked (GlcNAc...) asparagine glycans are attached at residues Asn-63 and Asn-103. 10 LRR repeats span residues 104–128, 130–151, 152–175, 176–200, 202–224, 226–248, 249–271, 273–297, 298–323, and 325–344; these read LSFL…VGNL, RLQY…VLSN, CSSL…EFGS, LSKL…LGNL, SLQM…IARL, QMIF…IYNL, SSLI…DFGS, LPNL…LSNI, SSLR…RLQN, and LLLG…DLDF. N-linked (GlcNAc...) asparagine glycosylation is found at Asn-135 and Asn-151. Residues Asn-188 and Asn-199 are each glycosylated (N-linked (GlcNAc...) asparagine). Asn-247 carries an N-linked (GlcNAc...) asparagine glycan. The N-linked (GlcNAc...) asparagine glycan is linked to Asn-296. N-linked (GlcNAc...) asparagine glycans are attached at residues Asn-331, Asn-336, Asn-350, and Asn-374. 11 LRR repeats span residues 351 to 374, 376 to 400, 401 to 424, 426 to 448, 449 to 472, 473 to 496, 498 to 520, 521 to 544, 546 to 567, 568 to 593, and 595 to 616; these read CSQL…FIAN, STQL…IGNL, VSLQ…LGEL, ELRK…LGNI, SGLT…LGSC, SYLL…LMEL, SLVV…IGKL, KFLL…LANC, SLEF…IRGL, TGLR…NFSK, and QNLN…VFRN. N-linked (GlcNAc...) asparagine glycans are attached at residues Asn-447, Asn-458, Asn-486, and Asn-503. 4 N-linked (GlcNAc...) asparagine glycosylation sites follow: Asn-579, Asn-590, Asn-598, and Asn-616. Residues 654–674 form a helical membrane-spanning segment; the sequence is IITICVSAVMAALLLLCLCVV. The Cytoplasmic portion of the chain corresponds to 675–1025; that stretch reads YLCWYKLRVK…RESFFRDEET (351 aa). Residue Thr-716 is modified to Phosphothreonine. The region spanning 719 to 1020 is the Protein kinase domain; it reads FSSSNLIGSG…KLVSIRESFF (302 aa). ATP is bound by residues 725–733 and Lys-748; that span reads IGSGNFGAV. 2 positions are modified to phosphotyrosine: Tyr-798 and Tyr-843. Catalysis depends on Asp-856, which acts as the Proton acceptor. Tyr-904 bears the Phosphotyrosine mark.

This sequence belongs to the protein kinase superfamily. Ser/Thr protein kinase family.

It is found in the cell membrane. It carries out the reaction L-seryl-[protein] + ATP = O-phospho-L-seryl-[protein] + ADP + H(+). It catalyses the reaction L-threonyl-[protein] + ATP = O-phospho-L-threonyl-[protein] + ADP + H(+). The sequence is that of Putative receptor-like protein kinase At3g47110 from Arabidopsis thaliana (Mouse-ear cress).